The primary structure comprises 304 residues: Quinolinate synthase (304 aa).

Iminosuccinate is bound by residues histidine 24 and serine 41. Cysteine 86 serves as a coordination point for [4Fe-4S] cluster. Iminosuccinate is bound by residues 112–114 and serine 129; that span reads YVN. Cysteine 171 is a [4Fe-4S] cluster binding site. Iminosuccinate-binding positions include 197–199 and threonine 214; that span reads HPE. Position 259 (cysteine 259) interacts with [4Fe-4S] cluster.

It belongs to the quinolinate synthase family. Type 2 subfamily. The cofactor is [4Fe-4S] cluster.

It localises to the cytoplasm. The catalysed reaction is iminosuccinate + dihydroxyacetone phosphate = quinolinate + phosphate + 2 H2O + H(+). The protein operates within cofactor biosynthesis; NAD(+) biosynthesis; quinolinate from iminoaspartate: step 1/1. Its function is as follows. Catalyzes the condensation of iminoaspartate with dihydroxyacetone phosphate to form quinolinate. The sequence is that of Quinolinate synthase from Methanosarcina barkeri (strain Fusaro / DSM 804).